The primary structure comprises 260 residues: MSQALTYASYLKIDELLNLQTPRSHGPEHDELLFIVIHQVYELWFKQILHELDYLCDLLRANDTGRANQSIRRILTILKTIVAQVDVMETMTPLQFNAFRGSLESASGFQSLQFREIEFVLGYKRPAILQHFAALPSHERLEQRYQEPSLWDSFLHYLQLNGYAIPSEQIGRDVTQSLVASPAIQTILITVYRQNPLVSNLCERLIDLDEGFQEWRYRHVKMVERTIGMKQGTGGSSGAAYLASTIKPFFPDLWAIRADL.

Substrate is bound by residues 34–38 (FIVIH) and Arg-100. His-219 lines the heme pocket. Substrate is bound at residue Thr-233.

The protein belongs to the tryptophan 2,3-dioxygenase family. In terms of assembly, homotetramer. Heme serves as cofactor.

It catalyses the reaction L-tryptophan + O2 = N-formyl-L-kynurenine. It participates in amino-acid degradation; L-tryptophan degradation via kynurenine pathway; L-kynurenine from L-tryptophan: step 1/2. Its function is as follows. Heme-dependent dioxygenase that catalyzes the oxidative cleavage of the L-tryptophan (L-Trp) pyrrole ring and converts L-tryptophan to N-formyl-L-kynurenine. Catalyzes the oxidative cleavage of the indole moiety. This Herpetosiphon aurantiacus (strain ATCC 23779 / DSM 785 / 114-95) protein is Tryptophan 2,3-dioxygenase.